A 195-amino-acid polypeptide reads, in one-letter code: Protein GrpE (195 aa).

Residues 1-30 (MSEQEKVEQEEISAELETQNEQEKPMEETE) are disordered. Positions 10-20 (EEISAELETQN) are enriched in acidic residues.

Belongs to the GrpE family. In terms of assembly, homodimer.

Its subcellular location is the cytoplasm. Its function is as follows. Participates actively in the response to hyperosmotic and heat shock by preventing the aggregation of stress-denatured proteins, in association with DnaK and GrpE. It is the nucleotide exchange factor for DnaK and may function as a thermosensor. Unfolded proteins bind initially to DnaJ; upon interaction with the DnaJ-bound protein, DnaK hydrolyzes its bound ATP, resulting in the formation of a stable complex. GrpE releases ADP from DnaK; ATP binding to DnaK triggers the release of the substrate protein, thus completing the reaction cycle. Several rounds of ATP-dependent interactions between DnaJ, DnaK and GrpE are required for fully efficient folding. The sequence is that of Protein GrpE from Histophilus somni (strain 2336) (Haemophilus somnus).